A 468-amino-acid chain; its full sequence is Tumor necrosis factor receptor superfamily member 10A (468 aa).

The first 23 residues, 1–23, serve as a signal peptide directing secretion; it reads MAPPPARVHLGAFLAVTPNPGSA. Positions 17–82 are disordered; sequence TPNPGSAASG…APGPRPAREA (66 aa). The segment covering 20 to 34 has biased composition (low complexity); that stretch reads PGSAASGTEAAAATP. The Extracellular portion of the chain corresponds to 24–239; that stretch reads ASGTEAAAAT…VHKESGNGHN (216 aa). Omega-N-methylarginine is present on Arg52. Low complexity predominate over residues 63–74; it reads GPSARARAGRAP. TNFR-Cys repeat units follow at residues 107 to 145, 147 to 188, and 189 to 229; these read SAAT…PGAC, RCTE…NTAC, and QCKP…DIEC. 7 disulfides stabilise this stretch: Cys132–Cys145, Cys148–Cys164, Cys167–Cys180, Cys170–Cys188, Cys190–Cys204, Cys207–Cys221, and Cys211–Cys229. Residue Asn156 is glycosylated (N-linked (GlcNAc...) asparagine). Residues 240-262 traverse the membrane as a helical segment; that stretch reads IWVILVVTLVVPLLLVAVLIVCC. The Cytoplasmic segment spans residues 263-468; the sequence is CIGSGCGGDP…DGTGSAVSLE (206 aa). The region spanning 365–448 is the Death domain; the sequence is MLFFDKFANI…HAREKIQDLL (84 aa). A phosphoserine mark is found at Ser424, Ser463, and Ser466.

In terms of assembly, monomer. Homooligomers and heterooligomers with TNFRSF10B. Three TNFRSF10A molecules interact with the TNFSF10 homotrimer. Can interact with TRADD and RIPK1. Interacts with ARAP1. In the absence of stimulation, interacts with BIRC2, DDX3X and GSK3B. The interaction with BIRC2 and DDX3X is further enhanced upon receptor stimulation and accompanied by DDX3X and BIRC2 cleavage. Interacts with ZDHHC3. Interacts with PTPN6; this interaction enables the inhibition of T-cell receptor signaling via LCK. As to quaternary structure, (Microbial infection) Interacts with HCMV protein UL141; this interaction prevents TNFRSF10A cell surface expression. Palmitoylated. Palmitoylation of TNFRSF10A is required for its association with lipid rafts, oligomerization and function in TRAIL-induced cell death. Palmitoylated by ZDHHC3. Widely expressed. High levels are found in spleen, peripheral blood leukocytes, small intestine and thymus, but also in K-562 erythroleukemia cells, MCF-7 breast carcinoma cells and activated T-cells.

It localises to the cell membrane. It is found in the membrane raft. The protein localises to the cytoplasm. Its subcellular location is the cytosol. Functionally, receptor for the cytotoxic ligand TNFSF10/TRAIL. The adapter molecule FADD recruits caspase-8 to the activated receptor. The resulting death-inducing signaling complex (DISC) performs caspase-8 proteolytic activation which initiates the subsequent cascade of caspases (aspartate-specific cysteine proteases) mediating apoptosis. Promotes the activation of NF-kappa-B. The polypeptide is Tumor necrosis factor receptor superfamily member 10A (TNFRSF10A) (Homo sapiens (Human)).